The primary structure comprises 553 residues: Interleukin-20 receptor subunit alpha (553 aa).

Positions 1 to 29 (MRAPGRPALRPLPLPPLLLLLLAAPWGRA) are cleaved as a signal peptide. Over 30-250 (VPCVSGGLPK…KDQSSEFKAK (221 aa)) the chain is Extracellular. 2 Fibronectin type-III domains span residues 37–135 (LPKP…FLET) and 136–242 (QIGP…TLKD). N-linked (GlcNAc...) asparagine glycans are attached at residues asparagine 42, asparagine 83, asparagine 91, asparagine 182, asparagine 191, and asparagine 200. Cysteines 87 and 95 form a disulfide. The cysteines at positions 215 and 236 are disulfide-linked. The helical transmembrane segment at 251–271 (IIFWYVLPVSITVFLFSVMGY) threads the bilayer. Residues 272-553 (SIYRYIHVGK…EWGLYVQMEN (282 aa)) are Cytoplasmic-facing. Disordered regions lie at residues 333–353 (SSDV…PPQE) and 462–515 (QEHT…LGEE). Over residues 334 to 346 (SDVSSLNDPQPSG) the composition is skewed to polar residues. Residues 499–513 (QDSEGCEPSEGDGLG) show a composition bias toward acidic residues.

It belongs to the type II cytokine receptor family. In terms of assembly, heterodimer with IL20RB and heterodimer with IL10RB. Widely expressed with highest levels in skin and testis and high levels in brain. Highly expressed in psoriatic skin.

The protein localises to the membrane. The IL20RA/IL20RB dimer is a receptor for IL19, IL20 and IL24. The IL20RA/IL10RB dimer is a receptor for IL26. This chain is Interleukin-20 receptor subunit alpha (IL20RA), found in Homo sapiens (Human).